The sequence spans 459 residues: MYKIDFSKPIHIHFIGIGGISMSGLAEILHEEGFTISGSDSKESDLTKTLAAKGIKVIYGQSADNITTGIDLVVYTAAIHESNPEFAAAKAAGIPMLTRAELLGQIMDNYDYSIAVAGTHGKTTTTSMISEILLAAQTDPTISVGGILSSIHGNLRVGDSEYFISEACEYTNSFLNFRPRYSIILNIEAEHLDFFKDINDIRHSFREYASNTLAGGATIINGEIDRYEEIVAGLPQKIITYGFDSKYDFYPENITYDDKACASFTAMRQGSPLFDVKLSVPGAHNVSNALAAIALSTTLGLDEESILTGLDKFGGADRRFQYKGKVNGVTIIDDYAHHPTEIRATLTAAQKYPHDRLVLCFQPHTYSRTKAFLNDFADVLSMADVVVLADIYAAREQNTYGISSKDILDLLLEKGVNAHYFPSFEEIEKFLSENCVNGDLLITMGAGNVVEIGEDLLKK.

118-124 (GTHGKTT) contributes to the ATP binding site.

Belongs to the MurCDEF family.

It is found in the cytoplasm. The enzyme catalyses UDP-N-acetyl-alpha-D-muramate + L-alanine + ATP = UDP-N-acetyl-alpha-D-muramoyl-L-alanine + ADP + phosphate + H(+). It participates in cell wall biogenesis; peptidoglycan biosynthesis. In terms of biological role, cell wall formation. This chain is UDP-N-acetylmuramate--L-alanine ligase, found in Agathobacter rectalis (strain ATCC 33656 / DSM 3377 / JCM 17463 / KCTC 5835 / VPI 0990) (Eubacterium rectale).